The following is a 726-amino-acid chain: ATP-dependent permease MDL1, mitochondrial (726 aa).

Residues 1–112 constitute a mitochondrion transit peptide; sequence MDPIRFGLSR…LAFLKLCVRH (112 aa). Asn66, Asn113, and Asn132 each carry an N-linked (GlcNAc...) asparagine glycan. 5 helical membrane-spanning segments follow: residues 158-178, 196-216, 306-326, 386-406, and 423-443; these read FFIA…IPYI, IMGI…FLGS, GYMS…GEYV, GIFF…ILAL, and SFLL…GCFT. The ABC transmembrane type-1 domain maps to 158–447; that stretch reads FFIAGSLLLV…LSGCFTDIMK (290 aa). The 238-residue stretch at 482–719 folds into the ABC transporter domain; the sequence is LSFRNVGFAY…GTNFYKLMRW (238 aa). N-linked (GlcNAc...) asparagine glycosylation is present at Asn502. 517–524 provides a ligand contact to ATP; that stretch reads APSGGGKS. Residues Asn584, Asn598, and Asn668 are each glycosylated (N-linked (GlcNAc...) asparagine).

The protein belongs to the ABC transporter superfamily. ABCB family. Mitochondrial peptide exporter (TC 3.A.1.212) subfamily.

Its subcellular location is the mitochondrion inner membrane. In terms of biological role, mediates export of peptides generated upon proteolysis of mitochondrial inner membrane proteins. This is ATP-dependent permease MDL1, mitochondrial (mdl1) from Schizosaccharomyces pombe (strain 972 / ATCC 24843) (Fission yeast).